Consider the following 644-residue polypeptide: Zinc finger protein 568 (644 aa).

The KRAB domain maps to valine 48–proline 119. C2H2-type zinc fingers lie at residues phenylalanine 222–histidine 244, tyrosine 250–histidine 272, tyrosine 278–histidine 300, tyrosine 306–histidine 328, tyrosine 334–histidine 356, tyrosine 362–histidine 384, tyrosine 390–histidine 412, tyrosine 418–histidine 440, tyrosine 446–histidine 468, tyrosine 474–histidine 496, tyrosine 502–histidine 524, tyrosine 530–histidine 552, phenylalanine 558–histidine 580, tyrosine 586–histidine 608, and phenylalanine 614–histidine 636.

Belongs to the krueppel C2H2-type zinc-finger protein family. As to quaternary structure, interacts with TRIM28.

It localises to the nucleus. Its function is as follows. Has transcriptional repression activity, partially through the recruitment of the corepressor TRIM28 but also has repression activity independently of this interaction. Essential during embryonic development, where it acts as a direct repressor of a placental-specific transcript of IGF2 in early development and regulates convergent extension movements required for axis elongation and tissue morphogenesis in all germ layers. Also important for normal morphogenesis of extraembryonic tissues including the yolk sac, extraembryonic mesoderm and placenta. May enhance proliferation or maintenance of neural stem cells. This Homo sapiens (Human) protein is Zinc finger protein 568 (ZNF568).